A 358-amino-acid chain; its full sequence is NADH-quinone oxidoreductase subunit H (358 aa).

Helical transmembrane passes span 30-50, 96-116, 129-149, 168-188, 201-221, 265-285, 297-317, and 336-356; these read VVIG…LIYM, FLYN…FSCL, VGVF…LLAG, IISY…LMGT, GWFI…YLIA, FIVA…LHIV, IPGF…LMWI, and YLVP…VFGL.

The protein belongs to the complex I subunit 1 family. In terms of assembly, NDH-1 is composed of 14 different subunits. Subunits NuoA, H, J, K, L, M, N constitute the membrane sector of the complex.

It localises to the cell inner membrane. It carries out the reaction a quinone + NADH + 5 H(+)(in) = a quinol + NAD(+) + 4 H(+)(out). Functionally, NDH-1 shuttles electrons from NADH, via FMN and iron-sulfur (Fe-S) centers, to quinones in the respiratory chain. The immediate electron acceptor for the enzyme in this species is believed to be ubiquinone. Couples the redox reaction to proton translocation (for every two electrons transferred, four hydrogen ions are translocated across the cytoplasmic membrane), and thus conserves the redox energy in a proton gradient. This subunit may bind ubiquinone. The sequence is that of NADH-quinone oxidoreductase subunit H from Bacteroides fragilis (strain ATCC 25285 / DSM 2151 / CCUG 4856 / JCM 11019 / LMG 10263 / NCTC 9343 / Onslow / VPI 2553 / EN-2).